We begin with the raw amino-acid sequence, 718 residues long: F-box/LRR-repeat protein 18 (718 aa).

An F-box domain is found at 25–72; that stretch reads GVHLLGFSDEILLHILSHVPSTDLILNVRRTCRKLAALCLDKSLIHTV. LRR repeat units follow at residues 77–103, 104–128, 129–153, 177–201, 324–352, 367–392, 393–422, 468–492, 516–540, 542–567, 572–597, and 599–623; these read DYQA…SMAG, CYWL…NLSG, CHLT…AIDV, KQTL…LLYF, CTLS…NLSG, EDDI…NLSA, AHHH…SLPV, CPQP…ELIG, AQSV…TLAQ, PSVL…SLAN, GKVV…RLEQ, and YFSA…CLVS.

In terms of assembly, directly interacts with SKP1 and CUL1.

Substrate-recognition component of the SCF (SKP1-CUL1-F-box protein)-type E3 ubiquitin ligase complex. The polypeptide is F-box/LRR-repeat protein 18 (FBXL18) (Homo sapiens (Human)).